Consider the following 707-residue polypeptide: E3 ubiquitin-protein ligase MARCHF7 (707 aa).

Methionine 1 carries the N-acetylmethionine modification. Disordered regions lie at residues 1-126 (MESK…QVPR), 157-279 (LMDY…RRTT), 294-343 (FFSR…RASE), 361-425 (SHNH…HIFR), and 444-473 (AANR…GRNT). Over residues 17–33 (SSSLSARMMSGSRGSSL) the composition is skewed to low complexity. A compositionally biased stretch (basic and acidic residues) spans 37 to 48 (YHSRDSSFRLDS). Residues 52 to 65 (STSASASASPFQSA) show a composition bias toward low complexity. Polar residues-rich tracts occupy residues 66–83 (WYSE…SQNQ), 95–126 (SCTN…QVPR), 189–212 (NSMS…HQTI), and 254–270 (ISNS…FQES). Positions 294–303 (FFSRRSSQDS) are enriched in low complexity. 3 stretches are compositionally biased toward polar residues: residues 304-336 (LNTR…TSEV), 373-392 (FNQE…SLRN), and 412-421 (IPTSDTSSRS). A phosphoserine mark is found at serine 317 and serine 389. Over residues 444 to 470 (AANRPQASAASSSATTGGSTSDSAQGG) the composition is skewed to low complexity. The RING-CH-type zinc-finger motif lies at 544–614 (SEEEEGDLCR…ELCKEKLELN (71 aa)). Zn(2+)-binding residues include cysteine 552, cysteine 555, cysteine 570, cysteine 572, histidine 580, cysteine 583, cysteine 604, and cysteine 607. The residue at position 686 (threonine 686) is a Phosphothreonine. Residues serine 687 and serine 691 each carry the phosphoserine modification.

Its subcellular location is the cytoplasm. The catalysed reaction is S-ubiquitinyl-[E2 ubiquitin-conjugating enzyme]-L-cysteine + [acceptor protein]-L-lysine = [E2 ubiquitin-conjugating enzyme]-L-cysteine + N(6)-ubiquitinyl-[acceptor protein]-L-lysine.. It participates in protein modification; protein ubiquitination. Functionally, E3 ubiquitin-protein ligase which may specifically enhance the E2 activity of HIP2. E3 ubiquitin ligases accept ubiquitin from an E2 ubiquitin-conjugating enzyme in the form of a thioester and then directly transfer the ubiquitin to targeted substrates. May be involved in T-cell proliferation by regulating LIF secretion. May play a role in lysosome homeostasis. Promotes 'Lys-6', 'Lys-11' and 'Lys-63'-linked mixed polyubiquitination on ATG14 leading to the inhibition of autophagy by impairing the interaction between ATG14 and STX7. Participates in the dopamine-mediated negative regulation of the NLRP3 inflammasome by promoting its uibiquitination and subsequent degradation. In Pongo abelii (Sumatran orangutan), this protein is E3 ubiquitin-protein ligase MARCHF7 (MARCHF7).